Reading from the N-terminus, the 142-residue chain is Transcriptional regulator MraZ (142 aa).

2 consecutive SpoVT-AbrB domains span residues 5 to 46 (THPV…DRSE) and 75 to 118 (AAAQ…DSEA).

Belongs to the MraZ family. As to quaternary structure, forms oligomers.

Its subcellular location is the cytoplasm. The protein localises to the nucleoid. The sequence is that of Transcriptional regulator MraZ from Tropheryma whipplei (strain TW08/27) (Whipple's bacillus).